The sequence spans 203 residues: Large ribosomal subunit protein uL18 (203 aa).

It belongs to the universal ribosomal protein uL18 family. As to quaternary structure, part of the 50S ribosomal subunit. Contacts the 5S and 23S rRNAs.

This is one of the proteins that bind and probably mediate the attachment of the 5S RNA into the large ribosomal subunit, where it forms part of the central protuberance. The protein is Large ribosomal subunit protein uL18 of Pyrococcus abyssi (strain GE5 / Orsay).